The sequence spans 162 residues: Caveolin-2 (162 aa).

Residues 1 to 86 (MGLETEKADV…FEISKYVIYK (86 aa)) are Cytoplasmic-facing. A Phosphotyrosine; by SRC modification is found at Y19. Phosphoserine occurs at positions 20 and 23. The residue at position 27 (Y27) is a Phosphotyrosine; by SRC. Position 36 is a phosphoserine (S36). An intramembrane region (helical) is located at residues 87 to 107 (FLTVFLAIPLAFIAGILFATL). The Cytoplasmic portion of the chain corresponds to 108–162 (SCLHIWILMPFVKTCLMVLPSVQTIWKSVTDVVIGPLCTSVGRIFSSVSMQLSHD).

The protein belongs to the caveolin family. As to quaternary structure, monomer or homodimer. Interacts with CAV1; the interaction forms a stable heterooligomeric complex that is required for targeting to lipid rafts and for caveolae formation. Tyrosine phosphorylated forms do not form heterooligomers with the Tyr-19-phosphorylated form existing as a monomer or dimer and the Tyr-27-form as a monomer only. Interacts (tyrosine phosphorylated form) with the SH2 domain-containing proteins, RASA1, NCK1 and SRC. Interacts (tyrosine phosphorylated form) with INSR; the interaction (Tyr-27-phosphorylated form) is increased on insulin stimulation. Interacts (Tyr-19-phosphorylated form) with MAPK1 (phosphorylated form); the interaction, promoted by insulin, leads to nuclear location and MAPK1 activation. Interacts with STAT3; the interaction is increased on insulin-induced tyrosine phosphorylation leading to STAT activation. In terms of processing, phosphorylated on serine and tyrosine residues. CAV1 promotes phosphorylation on Ser-23 which targets the complex to the plasma membrane, lipid rafts and caveolae. Phosphorylation on Ser-36 appears to modulate mitosis in endothelial cells. Phosphorylation on both Tyr-19 and Tyr-27 is required for insulin-induced 'Ser-727' phosphorylation of STAT3 and its activation. Phosphorylation on Tyr-19 is required for insulin-induced phosphorylation of MAPK1 and DNA binding of STAT3. Tyrosine phosphorylation is induced by both EGF and insulin. In the retina, mainly expressed in vessels, but also diffuse expression in the inner and outer plexiform layers and in the inner nuclear layer.

The protein resides in the nucleus. Its subcellular location is the cytoplasm. It is found in the golgi apparatus membrane. It localises to the cell membrane. The protein localises to the membrane. The protein resides in the caveola. Its function is as follows. May act as a scaffolding protein within caveolar membranes. Interacts directly with G-protein alpha subunits and can functionally regulate their activity. Acts as an accessory protein in conjunction with CAV1 in targeting to lipid rafts and driving caveolae formation. The Ser-36 phosphorylated form has a role in modulating mitosis in endothelial cells. Positive regulator of cellular mitogenesis of the MAPK signaling pathway. Required for the insulin-stimulated nuclear translocation and activation of MAPK1 and STAT3, and the subsequent regulation of cell cycle progression. This chain is Caveolin-2 (Cav2), found in Rattus norvegicus (Rat).